A 273-amino-acid polypeptide reads, in one-letter code: Putative phosphoenolpyruvate synthase regulatory protein (273 aa).

Residue 154-161 coordinates ADP; sequence GVSRSGKT.

The protein belongs to the pyruvate, phosphate/water dikinase regulatory protein family. PSRP subfamily.

It carries out the reaction [pyruvate, water dikinase] + ADP = [pyruvate, water dikinase]-phosphate + AMP + H(+). The enzyme catalyses [pyruvate, water dikinase]-phosphate + phosphate + H(+) = [pyruvate, water dikinase] + diphosphate. Bifunctional serine/threonine kinase and phosphorylase involved in the regulation of the phosphoenolpyruvate synthase (PEPS) by catalyzing its phosphorylation/dephosphorylation. The sequence is that of Putative phosphoenolpyruvate synthase regulatory protein from Halorhodospira halophila (strain DSM 244 / SL1) (Ectothiorhodospira halophila (strain DSM 244 / SL1)).